A 361-amino-acid polypeptide reads, in one-letter code: Fructose-bisphosphate aldolase (361 aa).

Ser-63 lines the D-glyceraldehyde 3-phosphate pocket. The Proton donor role is filled by Asp-110. Zn(2+) is bound by residues His-111, Asp-145, Glu-175, and His-227. Gly-228 is a binding site for dihydroxyacetone phosphate. His-266 provides a ligand contact to Zn(2+). Dihydroxyacetone phosphate is bound by residues 267-269 (GGS) and 288-291 (NLDT).

It belongs to the class II fructose-bisphosphate aldolase family. As to quaternary structure, homodimer. Requires Zn(2+) as cofactor.

It carries out the reaction beta-D-fructose 1,6-bisphosphate = D-glyceraldehyde 3-phosphate + dihydroxyacetone phosphate. Its pathway is carbohydrate degradation; glycolysis; D-glyceraldehyde 3-phosphate and glycerone phosphate from D-glucose: step 4/4. In terms of biological role, catalyzes the aldol condensation of dihydroxyacetone phosphate (DHAP or glycerone-phosphate) with glyceraldehyde 3-phosphate (G3P) to form fructose 1,6-bisphosphate (FBP) in gluconeogenesis and the reverse reaction in glycolysis. This is Fructose-bisphosphate aldolase (FBA1) from Kluyveromyces lactis (strain ATCC 8585 / CBS 2359 / DSM 70799 / NBRC 1267 / NRRL Y-1140 / WM37) (Yeast).